Consider the following 1318-residue polypeptide: 1-phosphatidylinositol 4,5-bisphosphate phosphodiesterase classes I and II (1318 aa).

One can recognise a PI-PLC X-box domain in the interval 318-466 (DDMDQPMSHY…LRRKIIIKNK (149 aa)). Residues histidine 333 and histidine 378 contribute to the active site. Substrate is bound by residues lysine 464 and lysine 466. A compositionally biased stretch (basic residues) spans 466 to 481 (KKKHHHHHHHHHHKKP). 2 disordered regions span residues 466–489 (KKKH…TPAA) and 505–594 (QQVG…KETE). Low complexity-rich tracts occupy residues 528 to 543 (ATGT…AGHA) and 554 to 563 (KDSTGSSDSD). Positions 571–580 (LPNTTPNLPS) are enriched in polar residues. Over residues 585 to 594 (PPEKAQKETE) the composition is skewed to basic and acidic residues. In terms of domain architecture, PI-PLC Y-box spans 599–715 (ISALVNYVQP…GYLLKPEFMR (117 aa)). Serine 628 and arginine 655 together coordinate substrate. The C2 domain maps to 715-843 (RRSDRRLDPF…NLRSEVGQPI (129 aa)). 2 disordered regions span residues 1080-1112 (LDLG…TQES) and 1296-1318 (GSHS…EMKT). Over residues 1088–1107 (ESAAADAGEDLAGGSSSLDG) the composition is skewed to low complexity.

As to expression, expressed in neuronal cell bodies of the optic lobe, central brain, and thoracic ganglia in adults, and the brain of larvae.

The catalysed reaction is a 1,2-diacyl-sn-glycero-3-phospho-(1D-myo-inositol-4,5-bisphosphate) + H2O = 1D-myo-inositol 1,4,5-trisphosphate + a 1,2-diacyl-sn-glycerol + H(+). The production of the second messenger molecules diacylglycerol (DAG) and inositol 1,4,5-trisphosphate (IP3) is mediated by activated phosphatidylinositol-specific phospholipase C enzymes. The chain is 1-phosphatidylinositol 4,5-bisphosphate phosphodiesterase classes I and II (Plc21C) from Drosophila melanogaster (Fruit fly).